A 227-amino-acid polypeptide reads, in one-letter code: Large ribosomal subunit protein bL25 (227 aa).

The protein belongs to the bacterial ribosomal protein bL25 family. CTC subfamily. Part of the 50S ribosomal subunit; part of the 5S rRNA/L5/L18/L25 subcomplex. Contacts the 5S rRNA. Binds to the 5S rRNA independently of L5 and L18.

This is one of the proteins that binds to the 5S RNA in the ribosome where it forms part of the central protuberance. The chain is Large ribosomal subunit protein bL25 from Polaromonas sp. (strain JS666 / ATCC BAA-500).